The sequence spans 339 residues: MGVNLKEIVDPVKKEIEFKQLFGKVIAIDAFNALYQFLFSIRQDGEPLRDSKGRITSHLSGLFYRTINLLEYGIKPIYVFDGTPPKFKIVAWEKRKKHKEQLESKYKEALKKGNIQEAIKYAKSLGKLDSYMVEEAKKLLEAMGIPYVQAPSEGEAEAAYLTKKGVSDYCGSQDYDSLLFGSPRVVRNITISEKRKLPGKNIYVEVKPEVIELEAVLNYWKITREQLIAIAMLLGTDYNEKVPGIGPKTAIEIVKRFGDPIKVIEYYKIPNGKEIFEFFLNPPVIDFEPKWGKPNKELIFKILVEEHDFNPERVERAIERLEKALNKINQKTLFSFFGS.

An N-domain region spans residues 1-99; sequence MGVNLKEIVD…VAWEKRKKHK (99 aa). Residues D29, D81, E153, E155, D174, D176, and D237 each contribute to the Mg(2+) site. Residues 117–258 are I-domain; that stretch reads EAIKYAKSLG…TAIEIVKRFG (142 aa). An interaction with PCNA region spans residues 329 to 337; that stretch reads NQKTLFSFF.

This sequence belongs to the XPG/RAD2 endonuclease family. FEN1 subfamily. As to quaternary structure, interacts with PCNA. PCNA stimulates the nuclease activity without altering cleavage specificity. Mg(2+) serves as cofactor.

Its function is as follows. Structure-specific nuclease with 5'-flap endonuclease and 5'-3' exonuclease activities involved in DNA replication and repair. During DNA replication, cleaves the 5'-overhanging flap structure that is generated by displacement synthesis when DNA polymerase encounters the 5'-end of a downstream Okazaki fragment. Binds the unpaired 3'-DNA end and kinks the DNA to facilitate 5' cleavage specificity. Cleaves one nucleotide into the double-stranded DNA from the junction in flap DNA, leaving a nick for ligation. Also involved in the base excision repair (BER) pathway. Acts as a genome stabilization factor that prevents flaps from equilibrating into structures that lead to duplications and deletions. Also possesses 5'-3' exonuclease activity on nicked or gapped double-stranded DNA. This Nanoarchaeum equitans (strain Kin4-M) protein is Flap endonuclease 1.